Here is a 549-residue protein sequence, read N- to C-terminus: Glucose-6-phosphate isomerase (549 aa).

Catalysis depends on Glu355, which acts as the Proton donor. Catalysis depends on residues His386 and Lys514.

Belongs to the GPI family.

It is found in the cytoplasm. The enzyme catalyses alpha-D-glucose 6-phosphate = beta-D-fructose 6-phosphate. It participates in carbohydrate biosynthesis; gluconeogenesis. Its pathway is carbohydrate degradation; glycolysis; D-glyceraldehyde 3-phosphate and glycerone phosphate from D-glucose: step 2/4. Functionally, catalyzes the reversible isomerization of glucose-6-phosphate to fructose-6-phosphate. In Aeromonas salmonicida (strain A449), this protein is Glucose-6-phosphate isomerase.